A 392-amino-acid polypeptide reads, in one-letter code: Protein Wnt-1 (392 aa).

The first 16 residues, 1–16, serve as a signal peptide directing secretion; sequence MKCLWLLVITVLCLRC. 11 cysteine pairs are disulfide-bonded: Cys89–Cys100, Cys142–Cys150, Cys152–Cys179, Cys227–Cys241, Cys229–Cys236, Cys321–Cys352, Cys337–Cys347, Cys351–Cys391, Cys367–Cys382, Cys369–Cys379, and Cys374–Cys375. N-linked (GlcNAc...) asparagine glycosylation is present at Asn99. Ser233 is lipidated: O-palmitoleoyl serine; by PORCN. Asn338 and Asn368 each carry an N-linked (GlcNAc...) asparagine glycan.

It belongs to the Wnt family. Palmitoleoylated by porcupine. The lipid group functions as a sorting signal, targeting the ligand to polarized vesicles that transport WNT-1 to unique sites at the cell surface. Depalmitoleoylated by notum, leading to inhibit Wnt signaling pathway.

It is found in the secreted. The protein resides in the extracellular space. It localises to the extracellular matrix. In terms of biological role, ligand for members of the frizzled family of seven transmembrane receptors. Probable developmental protein. In Bombyx mori (Silk moth), this protein is Protein Wnt-1 (WNT-1).